The following is a 2564-amino-acid chain: Histone-lysine N-methyltransferase SETD2 (2564 aa).

Residues 1–11 (MKQLQPQPPPK) show a composition bias toward pro residues. Residues 1–30 (MKQLQPQPPPKMGDFYDPEHPTPEEEENEA) are disordered. Residues 17 to 30 (DPEHPTPEEEENEA) show a composition bias toward basic and acidic residues. Ser-131 is subject to Phosphoserine. 3 disordered regions span residues 180-211 (STTV…VTEP), 272-561 (NEQA…TLSK), and 607-626 (PERE…DSPT). Positions 187–197 (PSSPPPPPPPA) are enriched in pro residues. Over residues 198 to 207 (QATTLSSPAP) the composition is skewed to low complexity. Over residues 278–290 (SSKKEDSHIGKDE) the composition is skewed to basic and acidic residues. A phosphoserine mark is found at Ser-321, Ser-323, and Ser-344. Basic and acidic residues-rich tracts occupy residues 335–400 (RSHD…ERER), 421–432 (RSERSHYYDSDR), 439–467 (PYRE…EYKK), and 479–528 (SYRD…EAIK). Residue Lys-359 forms a Glycyl lysine isopeptide (Lys-Gly) (interchain with G-Cter in SUMO2) linkage. Position 422 is a phosphoserine (Ser-422). A phosphoserine mark is found at Ser-532, Ser-614, and Ser-624. The segment covering 616–625 (APSNRLNDSP) has biased composition (polar residues). Thr-626 bears the Phosphothreonine mark. Residue Lys-637 forms a Glycyl lysine isopeptide (Lys-Gly) (interchain with G-Cter in SUMO2) linkage. 4 positions are modified to phosphoserine: Ser-698, Ser-708, Ser-744, and Ser-754. Lys-776 is covalently cross-linked (Glycyl lysine isopeptide (Lys-Gly) (interchain with G-Cter in SUMO2)). Disordered regions lie at residues 964–995 (EEGN…TSDD), 1036–1101 (EDYS…SDHW), 1133–1233 (LHKG…LGKT), 1264–1352 (QEKP…FSDQ), and 1393–1443 (LEKN…PGSA). Over residues 971–994 (PERRGRPEISLDERGEGGHVHTSD) the composition is skewed to basic and acidic residues. The segment covering 1045 to 1058 (SNDESDSEDTDSDD) has biased composition (acidic residues). A compositionally biased stretch (low complexity) spans 1084 to 1095 (SPCSSRSSQSYR). Ser-1098 is subject to Phosphoserine. The span at 1162 to 1171 (HPQSDGVDST) shows a compositional bias: polar residues. Basic and acidic residues predominate over residues 1172–1191 (SHTDVKSDPLGHPNSEETVK). Positions 1215-1225 (KSWQQTTFQNR) are enriched in polar residues. Ser-1228 is modified (phosphoserine). Residues 1265-1276 (EKPSTTYQQPDS) show a composition bias toward polar residues. Basic and acidic residues predominate over residues 1393-1403 (LEKNDIKDRGP). Phosphoserine is present on residues Ser-1413, Ser-1415, and Ser-1417. An interaction with TUBA1A region spans residues 1418-1714 (DGELQDRKKV…KKERSRKKDS (297 aa)). The segment covering 1421–1431 (LQDRKKVRVEV) has biased composition (basic and acidic residues). In terms of domain architecture, AWS spans 1494–1548 (IKRMQCECTPLSKDERAQGEIACGEDCLNRLLMIECSSRCPNGDYCSNRRFQRKQ). The Zn(2+) site is built by Cys-1499, Cys-1501, Cys-1516, Cys-1520, Cys-1529, Cys-1533, and Cys-1539. Residues 1550–1667 (ADVEVILTEK…SGSELTFDYQ (118 aa)) enclose the SET domain. S-adenosyl-L-methionine-binding positions include 1560–1562 (KGW), 1603–1605 (HYY), and 1628–1629 (NH). Cys-1631 provides a ligand contact to Zn(2+). A Post-SET domain is found at 1674–1690 (EAQKCFCGSANCRGYLG). Gln-1676 contacts S-adenosyl-L-methionine. Cys-1678 serves as a coordination point for Zn(2+). Residue Phe-1679 participates in S-adenosyl-L-methionine binding. Positions 1680 and 1685 each coordinate Zn(2+). Phosphoserine is present on residues Ser-1696, Ser-1844, and Ser-1845. A disordered region spans residues 1831–1872 (KTAVPPLSEGDGYSSENTSRAHTPLNTPDPSTKLSTEADTDT). The segment covering 1844 to 1867 (SSENTSRAHTPLNTPDPSTKLSTE) has biased composition (polar residues). A phosphothreonine mark is found at Thr-1853 and Thr-1872. Ser-1888 is subject to Phosphoserine. Residues 1921–2142 (EELQSQQLLP…EAQKQQQQMQ (222 aa)) form a disordered region. The segment covering 1924 to 1935 (QSQQLLPQQLPE) has biased composition (low complexity). Ser-1952 is modified (phosphoserine). Basic and acidic residues predominate over residues 1960 to 1972 (IEPKESNGTKLEE). The segment covering 1973 to 1990 (PINEETPSQDEEEGVSDV) has biased composition (acidic residues). A phosphoserine mark is found at Ser-1980, Ser-1988, and Ser-1995. Composition is skewed to basic and acidic residues over residues 1991–2004 (ESER…KTVD), 2014–2046 (DSWK…DAVG), and 2059–2072 (RSRE…TQNK). Residues Ser-2080 and Ser-2082 each carry the phosphoserine modification. Basic and acidic residues-rich tracts occupy residues 2090-2100 (RGTKRPDDRYD) and 2111-2135 (KDRN…REAQ). Residues 2117 to 2146 (STEERRKLFEQEVAQREAQKQQQQMQNLGM) adopt a coiled-coil conformation. Residues 2137-2366 (QQQQMQNLGM…APGQPQPLQP (230 aa)) are low charge region. Positions 2389–2422 (IVLPPNWKTARDPEGKIYYYHVITRQTQWDPPTW) constitute a WW domain. Residues 2439–2465 (LGTPTYDENPMKASKKPKTAEADTSSE) are disordered. The segment at 2457 to 2564 (TAEADTSSEL…YKPKEDTELE (108 aa)) is interaction with POLR2A.

It belongs to the class V-like SAM-binding methyltransferase superfamily. Histone-lysine methyltransferase family. SET2 subfamily. As to quaternary structure, specifically interacts with hyperphosphorylated C-terminal domain (CTD) of RNA polymerase II large subunit (POLR2A): binds to CTD heptad repeats doubly phosphorylated on 'Ser-2' and 'Ser-5' of each heptad. Interacts with HTT. Interacts with IWS1. Interacts with p53/TP53; leading to regulate p53/TP53 target genes. Component of a complex with HNRNPL. Interacts with TUBA1A; the interaction is independent on alpha-tubulin acetylation on 'Lys-40'. Interacts with STAT1. In terms of processing, may be automethylated. In terms of tissue distribution, ubiquitously expressed.

It localises to the nucleus. The protein localises to the chromosome. The enzyme catalyses L-lysyl(36)-[histone H3] + 3 S-adenosyl-L-methionine = N(6),N(6),N(6)-trimethyl-L-lysyl(36)-[histone H3] + 3 S-adenosyl-L-homocysteine + 3 H(+). It catalyses the reaction L-lysyl-[protein] + S-adenosyl-L-methionine = N(6)-methyl-L-lysyl-[protein] + S-adenosyl-L-homocysteine + H(+). The catalysed reaction is L-lysyl-[protein] + 3 S-adenosyl-L-methionine = N(6),N(6),N(6)-trimethyl-L-lysyl-[protein] + 3 S-adenosyl-L-homocysteine + 3 H(+). Its activity is regulated as follows. Specifically inhibited by sinefungin derivatives. N-propyl sinefungin (Pr-SNF) interacts preferentially with SETD2. Its function is as follows. Histone methyltransferase that specifically trimethylates 'Lys-36' of histone H3 (H3K36me3) using dimethylated 'Lys-36' (H3K36me2) as substrate. It is capable of trimethylating unmethylated H3K36 (H3K36me0) in vitro. Represents the main enzyme generating H3K36me3, a specific tag for epigenetic transcriptional activation. Plays a role in chromatin structure modulation during elongation by coordinating recruitment of the FACT complex and by interacting with hyperphosphorylated POLR2A. Acts as a key regulator of DNA mismatch repair in G1 and early S phase by generating H3K36me3, a mark required to recruit MSH6 subunit of the MutS alpha complex: early recruitment of the MutS alpha complex to chromatin to be replicated allows a quick identification of mismatch DNA to initiate the mismatch repair reaction. Required for DNA double-strand break repair in response to DNA damage: acts by mediating formation of H3K36me3, promoting recruitment of RAD51 and DNA repair via homologous recombination (HR). Acts as a tumor suppressor. H3K36me3 also plays an essential role in the maintenance of a heterochromatic state, by recruiting DNA methyltransferase DNMT3A. H3K36me3 is also enhanced in intron-containing genes, suggesting that SETD2 recruitment is enhanced by splicing and that splicing is coupled to recruitment of elongating RNA polymerase. Required during angiogenesis. Required for endoderm development by promoting embryonic stem cell differentiation toward endoderm: acts by mediating formation of H3K36me3 in distal promoter regions of FGFR3, leading to regulate transcription initiation of FGFR3. In addition to histones, also mediates methylation of other proteins, such as tubulins and STAT1. Trimethylates 'Lys-40' of alpha-tubulins such as TUBA1B (alpha-TubK40me3); alpha-TubK40me3 is required for normal mitosis and cytokinesis and may be a specific tag in cytoskeletal remodeling. Involved in interferon-alpha-induced antiviral defense by mediating both monomethylation of STAT1 at 'Lys-525' and catalyzing H3K36me3 on promoters of some interferon-stimulated genes (ISGs) to activate gene transcription. Functionally, (Microbial infection) Recruited to the promoters of adenovirus 12 E1A gene in case of infection, possibly leading to regulate its expression. In Homo sapiens (Human), this protein is Histone-lysine N-methyltransferase SETD2 (SETD2).